The chain runs to 350 residues: Outer membrane protein A (350 aa).

Residues 1–21 (MKKTAIAIAVALAGFATVAQA) form the signal peptide. Transmembrane regions (beta stranded) follow at residues 27–37 (TWYAGAKLGWS), 55–66 (QLGAGAFGGYQV), 70–78 (VGFEMGYDW), 96–107 (QGVQLTAKLGYP), 112–120 (LDVYTRLGG), 146–155 (PVFAGGIEYA), 160–167 (IATRLEYQ), and 186–194 (LLSVGVSYR). 4 tandem repeats follow at residues 205 to 206 (AP), 207 to 208 (AP), 209 to 210 (AP), and 211 to 212 (AP). The segment at 205–212 (APAPAPAP) is 4 X 2 AA tandem repeats of A-P. In terms of domain architecture, OmpA-like spans 214–342 (VQTKHFTLKS…RVEIEVKGVK (129 aa)). Cysteines 315 and 327 form a disulfide.

The protein belongs to the outer membrane OOP (TC 1.B.6) superfamily. OmpA family. In terms of assembly, monomer and homodimer.

It localises to the cell outer membrane. In terms of biological role, with TolR probably plays a role in maintaining the position of the peptidoglycan cell wall in the periplasm. Acts as a porin with low permeability that allows slow penetration of small solutes; an internal gate slows down solute passage. Its function is as follows. Required for conjugation with F-type plasmids; probably serves as the mating receptor on recipient cells. This is Outer membrane protein A from Salmonella typhi.